The chain runs to 638 residues: RAF proto-oncogene serine/threonine-protein kinase (638 aa).

Position 43 is a phosphoserine (Ser43). The 75-residue stretch at 56-130 folds into the RBD domain; sequence STMRVYLPNK…VGAELQVDFL (75 aa). A Phorbol-ester/DAG-type zinc finger spans residues 137-183; it reads THNFVRKTFLKLAFCDICQKFLLNAFRCQTCGYKFHEHCSTKVPTMC. Zn(2+) contacts are provided by His138, Cys151, Cys154, Cys164, Cys167, His172, Cys175, and Cys183. Ser257 is subject to Phosphoserine. Thr266 bears the Phosphothreonine; by autocatalysis mark. Positions 279-323 are disordered; sequence LRSHSESGSPNNLSPTGWSNAKAPAPTHREKAASSTGQEKNKIRA. Polar residues predominate over residues 284-297; it reads ESGSPNNLSPTGWS. Phosphoserine is present on Ser329. Positions 340-600 constitute a Protein kinase domain; it reads VMLSSRIGSG…PQILSSIELL (261 aa). ATP is bound by residues 346–354 and Lys366; that span reads IGSGSFGTV. The active-site Proton acceptor is Asp459. Position 490 is a phosphoserine (Ser490).

Belongs to the protein kinase superfamily. TKL Ser/Thr protein kinase family. RAF subfamily. Zn(2+) is required as a cofactor. In terms of processing, phosphorylation at Ser-257 inactivates kinase activity. Dephosphorylation of Ser-257 by a complex containing protein phosphatase 1 relieves inactivation, leading to stimulate RAF1 activity.

It localises to the cytoplasm. The protein localises to the cell membrane. The catalysed reaction is L-seryl-[protein] + ATP = O-phospho-L-seryl-[protein] + ADP + H(+). The enzyme catalyses L-threonyl-[protein] + ATP = O-phospho-L-threonyl-[protein] + ADP + H(+). Functionally, serine/threonine-protein kinase that acts as a regulatory link between the membrane-associated Ras GTPases and the MAPK/ERK cascade, and this critical regulatory link functions as a switch determining cell fate decisions. RAF1 activation initiates a mitogen-activated protein kinase (MAPK) cascade that comprises a sequential phosphorylation of the dual-specific MAPK kinases (MAP2K1/MEK1 and MAP2K2/MEK2) and the extracellular signal-regulated kinases (MAPK3/ERK1 and MAPK1/ERK2). This Xenopus laevis (African clawed frog) protein is RAF proto-oncogene serine/threonine-protein kinase (raf1).